The sequence spans 374 residues: C-X-C chemokine receptor type 5 (374 aa).

Over 1-57 (MNSPISLDMGAITYNMDDLYKELAIYSNSTEIPLQDSIFCSTEEGPLLTSFKTIFMP) the chain is Extracellular. The N-linked (GlcNAc...) asparagine glycan is linked to Asn-28. The helical transmembrane segment at 58–78 (VAYSLIFLLGMMGNILVLVIL) threads the bilayer. Over 79 to 90 (ERHRHTRSSTET) the chain is Cytoplasmic. A helical transmembrane segment spans residues 91 to 111 (FLFHLAVADLLLVFILPFAVA). Topologically, residues 112–126 (EGSVGWVLGTFLCKT) are extracellular. An intrachain disulfide couples Cys-124 to Cys-204. The chain crosses the membrane as a helical span at residues 127–147 (VIALHKINFYCSSLLLACIAV). Over 148–169 (DRYLAIVHAVHAYRRRRLLSIH) the chain is Cytoplasmic. Residues 170 to 190 (ITCSTIWLAGFLFALPELLFA) traverse the membrane as a helical segment. The Extracellular portion of the chain corresponds to 191-221 (KVVQPHNNESLPQCIFSQENEAETRAWFASR). Asn-198 is a glycosylation site (N-linked (GlcNAc...) asparagine). The helical transmembrane segment at 222 to 242 (FLYHTGGFLLPMLVMAWCYVG) threads the bilayer. The Cytoplasmic portion of the chain corresponds to 243 to 261 (VVHRLLQAQRRPQRQKAVR). The chain crosses the membrane as a helical span at residues 262–282 (VAILVTSIFLLCWSPYHIVIF). At 283 to 306 (LDTLERLKAVNSSCELSGYLSVAI) the chain is on the extracellular side. The chain crosses the membrane as a helical span at residues 307–327 (TLCEFLGLAHCCLNPMLYTFA). The Cytoplasmic segment spans residues 328-374 (GVKFRSDLSRLLTKLGCAGPASLCQLFPGWRKSSLSESENATSLTTF).

Belongs to the G-protein coupled receptor 1 family. As to expression, expressed in neuronal and lymphatic tissue.

It is found in the cell membrane. Its function is as follows. Cytokine receptor that binds to B-lymphocyte chemoattractant (BLC). Involved in B-cell migration into B-cell follicles of spleen and Peyer patches but not into those of mesenteric or peripheral lymph nodes. The polypeptide is C-X-C chemokine receptor type 5 (Cxcr5) (Rattus norvegicus (Rat)).